The primary structure comprises 354 residues: Probable L-ascorbate-6-phosphate lactonase UlaG (354 aa).

This sequence belongs to the UlaG family. A divalent metal cation is required as a cofactor.

It localises to the cytoplasm. It catalyses the reaction L-ascorbate 6-phosphate + H2O = 3-dehydro-L-gulonate 6-phosphate. Its pathway is cofactor degradation; L-ascorbate degradation; D-xylulose 5-phosphate from L-ascorbate: step 1/4. Probably catalyzes the hydrolysis of L-ascorbate-6-P into 3-keto-L-gulonate-6-P. Is essential for L-ascorbate utilization under anaerobic conditions. This chain is Probable L-ascorbate-6-phosphate lactonase UlaG, found in Shigella flexneri.